Reading from the N-terminus, the 424-residue chain is Histidine--tRNA ligase (424 aa).

It belongs to the class-II aminoacyl-tRNA synthetase family. As to quaternary structure, homodimer.

The protein resides in the cytoplasm. The catalysed reaction is tRNA(His) + L-histidine + ATP = L-histidyl-tRNA(His) + AMP + diphosphate + H(+). In Bacillus subtilis (strain 168), this protein is Histidine--tRNA ligase (hisS).